The chain runs to 61 residues: Insect toxin LqhIT5 (61 aa).

One can recognise an LCN-type CS-alpha/beta domain in the interval 1 to 61 (DGYIRGGDGC…EWKYETNTCG (61 aa)). Disulfide bonds link Cys-10–Cys-60, Cys-14–Cys-35, Cys-21–Cys-42, and Cys-25–Cys-44.

Belongs to the long (4 C-C) scorpion toxin superfamily. Sodium channel inhibitor family. Beta subfamily. In terms of tissue distribution, expressed by the venom gland.

It is found in the secreted. Excitatory insect beta-toxins induce a spastic paralysis. They bind voltage-independently at site-4 of sodium channels (Nav) and shift the voltage of activation toward more negative potentials thereby affecting sodium channel activation and promoting spontaneous and repetitive firing. This toxin is active only on insects. It operates by inducing a fast contraction paralysis without depressant activity. It is more similar to the excitatory toxins in its mode of action and the depressant toxins in its primary structure. This is Insect toxin LqhIT5 from Leiurus hebraeus (Hebrew deathstalker scorpion).